Consider the following 243-residue polypeptide: Peptidase E (243 aa).

Catalysis depends on charge relay system residues Ser118, Asp133, and His155.

It belongs to the peptidase S51 family.

It is found in the cytoplasm. The catalysed reaction is Dipeptidase E catalyzes the hydrolysis of dipeptides Asp-|-Xaa. It does not act on peptides with N-terminal Glu, Asn or Gln, nor does it cleave isoaspartyl peptides.. In terms of biological role, hydrolyzes dipeptides containing N-terminal aspartate residues. May play a role in allowing the cell to use peptide aspartate to spare carbon otherwise required for the synthesis of the aspartate family of amino acids. In Streptomyces coelicolor (strain ATCC BAA-471 / A3(2) / M145), this protein is Peptidase E.